Consider the following 70-residue polypeptide: DNA-directed RNA polymerase subunit omega (70 aa).

Belongs to the RNA polymerase subunit omega family. In terms of assembly, the RNAP catalytic core consists of 2 alpha, 1 beta, 1 beta' and 1 omega subunit. When a sigma factor is associated with the core the holoenzyme is formed, which can initiate transcription.

It carries out the reaction RNA(n) + a ribonucleoside 5'-triphosphate = RNA(n+1) + diphosphate. Functionally, promotes RNA polymerase assembly. Latches the N- and C-terminal regions of the beta' subunit thereby facilitating its interaction with the beta and alpha subunits. This chain is DNA-directed RNA polymerase subunit omega, found in Thermoanaerobacter sp. (strain X514).